A 267-amino-acid polypeptide reads, in one-letter code: 4-hydroxy-tetrahydrodipicolinate reductase (267 aa).

NAD(+) contacts are provided by residues Gly9–Met14 and Asp35. An NADP(+)-binding site is contributed by Arg36. Residues Gly98–Thr100 and Ala122–Met125 each bind NAD(+). His155 serves as the catalytic Proton donor/acceptor. His156 contacts (S)-2,3,4,5-tetrahydrodipicolinate. Lys159 (proton donor) is an active-site residue. Residue Gly165–Thr166 participates in (S)-2,3,4,5-tetrahydrodipicolinate binding.

This sequence belongs to the DapB family.

The protein localises to the cytoplasm. The catalysed reaction is (S)-2,3,4,5-tetrahydrodipicolinate + NAD(+) + H2O = (2S,4S)-4-hydroxy-2,3,4,5-tetrahydrodipicolinate + NADH + H(+). The enzyme catalyses (S)-2,3,4,5-tetrahydrodipicolinate + NADP(+) + H2O = (2S,4S)-4-hydroxy-2,3,4,5-tetrahydrodipicolinate + NADPH + H(+). It functions in the pathway amino-acid biosynthesis; L-lysine biosynthesis via DAP pathway; (S)-tetrahydrodipicolinate from L-aspartate: step 4/4. Its function is as follows. Catalyzes the conversion of 4-hydroxy-tetrahydrodipicolinate (HTPA) to tetrahydrodipicolinate. This chain is 4-hydroxy-tetrahydrodipicolinate reductase, found in Thiobacillus denitrificans (strain ATCC 25259 / T1).